The chain runs to 649 residues: Lipoteichoic acid synthase 2 (649 aa).

The Cytoplasmic segment spans residues M1–G9. The chain crosses the membrane as a helical span at residues L10 to L30. At N31–K42 the chain is on the extracellular side. Residues I43 to F63 form a helical membrane-spanning segment. At K64–Q69 the chain is on the cytoplasmic side. The chain crosses the membrane as a helical span at residues T70–Y90. Residues R91–S118 are Extracellular-facing. The chain crosses the membrane as a helical span at residues L119 to I139. Over K140–K151 the chain is Cytoplasmic. A helical membrane pass occupies residues S152–E172. At S173–K649 the chain is on the extracellular side. Mn(2+)-binding residues include E253 and T297. Residue T297 is part of the active site. A substrate-binding site is contributed by H412. Residues D471 and H472 each coordinate Mn(2+). The disordered stretch occupies residues F622–K649. Basic and acidic residues predominate over residues D631–K649.

It belongs to the LTA synthase family. Proteolytically cleaved.

It is found in the cell membrane. It localises to the secreted. It participates in cell wall biogenesis; lipoteichoic acid biosynthesis. Its function is as follows. Catalyzes the polymerization of lipoteichoic acid (LTA) polyglycerol phosphate, a reaction that presumably uses phosphatidylglycerol (PG) as substrate. The polypeptide is Lipoteichoic acid synthase 2 (ltaS2) (Bacillus subtilis (strain 168)).